A 514-amino-acid polypeptide reads, in one-letter code: Ribonuclease Y (514 aa).

The helical transmembrane segment at 3–23 threads the bilayer; sequence VLWMVLGLAIGIAVGAAAGYI. The 64-residue stretch at 203–266 folds into the KH domain; that stretch reads TVKAVELPSD…EVARIAMERL (64 aa). Residues 330 to 423 form the HD domain; sequence VLAHSVEVAN…VATADAVSAA (94 aa).

This sequence belongs to the RNase Y family.

It localises to the cell membrane. Functionally, endoribonuclease that initiates mRNA decay. This Rubrobacter xylanophilus (strain DSM 9941 / JCM 11954 / NBRC 16129 / PRD-1) protein is Ribonuclease Y.